Here is a 148-residue protein sequence, read N- to C-terminus: Stathmin (148 aa).

The SLD domain occupies 4–145 (SDIQVKELEK…NKEGKDPGEA (142 aa)). Ser-16 is subject to Phosphoserine; by PKA. Phosphoserine; by CDK1 is present on Ser-38. Residues 41 to 140 (KKKDLSLEEI…EEVRKNKEGK (100 aa)) are a coiled coil. At Ser-63 the chain carries Phosphoserine; by PKA. Residues 122–148 (RLREKDKHIEEVRKNKEGKDPGEAETN) are disordered.

This sequence belongs to the stathmin family. As to quaternary structure, binds to two alpha/beta-tubulin heterodimers. In terms of processing, many different phosphorylated forms are observed depending on specific combinations among the sites which can be phosphorylated. MAPK is responsible for the phosphorylation of stathmin in response to NGF.

Its subcellular location is the cytoplasm. It localises to the cytoskeleton. Functionally, involved in the regulation of the microtubule (MT) filament system by destabilizing microtubules. It prevents assembly and promotes disassembly of microtubules. This is Stathmin (STMN1) from Gallus gallus (Chicken).